We begin with the raw amino-acid sequence, 507 residues long: Nuclear distribution protein PAC1 (507 aa).

Positions 72-98 form a coiled coil; sequence STVLRLQRKIMDLTDEVSNLKTIIEAK. WD repeat units lie at residues 125-164, 170-222, 225-265, 268-312, 315-389, 410-449, and 474-507; these read QTHQ…PSIP, AHSR…QIRI, GHDH…CTRT, GHSD…GLCL, GHSH…VRPN, GHQS…TGGR, and PKDT…RLWS.

The protein belongs to the WD repeat LIS1/nudF family. As to quaternary structure, self-associates. Interacts with NDL1 and dynein.

Its subcellular location is the cytoplasm. It localises to the cytoskeleton. The protein resides in the spindle pole. Functionally, positively regulates the activity of the minus-end directed microtubule motor protein dynein. Plays a central role in positioning the mitotic spindle at the bud neck during cell division. Targets cytoplasmic dynein to microtubule plus ends, thereby promoting dynein-mediated microtubule sliding along the bud cortex and consequently the movement of the mitotic spindle to the bud neck. This Meyerozyma guilliermondii (strain ATCC 6260 / CBS 566 / DSM 6381 / JCM 1539 / NBRC 10279 / NRRL Y-324) (Yeast) protein is Nuclear distribution protein PAC1.